The chain runs to 487 residues: 2-aminomuconic semialdehyde dehydrogenase (487 aa).

209 to 215 (GTGPRVG) is a binding site for NAD(+). Glu253 serves as the catalytic Proton acceptor. The active-site Nucleophile is Cys287. Ser362 is modified (phosphoserine).

The protein belongs to the aldehyde dehydrogenase family. As to expression, highly expressed in adult kidney and liver. Detected at lower levels in fetal liver and kidney.

The protein resides in the cytoplasm. The enzyme catalyses 2-aminomuconate 6-semialdehyde + NAD(+) + H2O = (2Z,4E)-2-aminomuconate + NADH + 2 H(+). The protein operates within amino-acid degradation; L-kynurenine degradation. Catalyzes the NAD-dependent oxidation of 2-aminomuconic semialdehyde of the kynurenine metabolic pathway in L-tryptophan degradation. In Homo sapiens (Human), this protein is 2-aminomuconic semialdehyde dehydrogenase.